Here is a 350-residue protein sequence, read N- to C-terminus: Quinone oxidoreductase-like protein 2 (350 aa).

The residue at position 36 (K36) is an N6-acetyllysine. The residue at position 201 (K201) is an N6-succinyllysine. Residues K302 and K328 each carry the N6-acetyllysine modification.

Belongs to the zinc-containing alcohol dehydrogenase family. Quinone oxidoreductase subfamily.

This Rattus norvegicus (Rat) protein is Quinone oxidoreductase-like protein 2.